The sequence spans 272 residues: 3-methyl-2-oxobutanoate hydroxymethyltransferase (272 aa).

2 residues coordinate Mg(2+): Asp43 and Asp82. Residues 43–44 (DS), Asp82, and Lys112 contribute to the 3-methyl-2-oxobutanoate site. Mg(2+) is bound at residue Glu114. Glu179 functions as the Proton acceptor in the catalytic mechanism.

This sequence belongs to the PanB family. Homodecamer; pentamer of dimers. Mg(2+) is required as a cofactor.

Its subcellular location is the cytoplasm. The catalysed reaction is 3-methyl-2-oxobutanoate + (6R)-5,10-methylene-5,6,7,8-tetrahydrofolate + H2O = 2-dehydropantoate + (6S)-5,6,7,8-tetrahydrofolate. It participates in cofactor biosynthesis; (R)-pantothenate biosynthesis; (R)-pantoate from 3-methyl-2-oxobutanoate: step 1/2. Functionally, catalyzes the reversible reaction in which hydroxymethyl group from 5,10-methylenetetrahydrofolate is transferred onto alpha-ketoisovalerate to form ketopantoate. This chain is 3-methyl-2-oxobutanoate hydroxymethyltransferase, found in Staphylococcus aureus (strain Newman).